A 160-amino-acid chain; its full sequence is Single-stranded DNA-binding protein 2 (160 aa).

One can recognise an SSB domain in the interval 2-104; the sequence is MNRVVLVGRL…VVAESVQFLE (103 aa). The disordered stretch occupies residues 107–160; the sequence is NNNVEGATSNNYQNKANYSNNNQTSSYRADTSQKSDSFASEGKPIDINEDDLPF. The span at 115-129 shows a compositional bias: low complexity; it reads SNNYQNKANYSNNNQ. Polar residues predominate over residues 130 to 144; it reads TSSYRADTSQKSDSF. The Important for interaction with partner proteins motif lies at 155–160; that stretch reads EDDLPF.

In terms of assembly, homotetramer.

Functionally, plays an important role in DNA replication, recombination and repair. Binds to ssDNA and to an array of partner proteins to recruit them to their sites of action during DNA metabolism. In Listeria monocytogenes serovar 1/2a (strain ATCC BAA-679 / EGD-e), this protein is Single-stranded DNA-binding protein 2 (ssb2).